The following is a 503-amino-acid chain: Probable protein kinase UbiB (503 aa).

Residues 13–35 form a helical membrane-spanning segment; sequence TFYRYRLAGLCASLMGSGWICAL. Positions 120–491 constitute a Protein kinase domain; the sequence is EFETEPIASA…QQRQSLWLAV (372 aa). ATP-binding positions include 126–134 and K148; that span reads IASASIAQV. D283 acts as the Proton acceptor in catalysis. The helical transmembrane segment at 485-502 threads the bilayer; the sequence is QSLWLAVIAVVLLLILLL.

It belongs to the ABC1 family. UbiB subfamily.

It localises to the cell inner membrane. It participates in cofactor biosynthesis; ubiquinone biosynthesis [regulation]. Functionally, is probably a protein kinase regulator of UbiI activity which is involved in aerobic coenzyme Q (ubiquinone) biosynthesis. The chain is Probable protein kinase UbiB from Neisseria meningitidis serogroup B (strain ATCC BAA-335 / MC58).